A 115-amino-acid chain; its full sequence is Large ribosomal subunit protein uL22c (115 aa).

Belongs to the universal ribosomal protein uL22 family. As to quaternary structure, part of the 50S ribosomal subunit.

It is found in the plastid. The protein localises to the chloroplast. Functionally, this protein binds specifically to 23S rRNA. Its function is as follows. The globular domain of the protein is located near the polypeptide exit tunnel on the outside of the subunit, while an extended beta-hairpin is found that lines the wall of the exit tunnel in the center of the 70S ribosome. The protein is Large ribosomal subunit protein uL22c (rpl22) of Phaeodactylum tricornutum (strain CCAP 1055/1).